A 240-amino-acid chain; its full sequence is Lipoprotein signal peptidase (240 aa).

The next 4 helical transmembrane spans lie at 38-58 (LIWK…TSFL), 73-93 (LIPG…FGTL), 98-118 (PSLV…VLLF), and 120-140 (SNYL…SNII). Residues Asp162 and Asp179 contribute to the active site. A helical transmembrane segment spans residues 177–197 (FPDTFVIIGMIFVGIQIIISF).

The protein belongs to the peptidase A8 family.

The protein resides in the cell membrane. It carries out the reaction Release of signal peptides from bacterial membrane prolipoproteins. Hydrolyzes -Xaa-Yaa-Zaa-|-(S,diacylglyceryl)Cys-, in which Xaa is hydrophobic (preferably Leu), and Yaa (Ala or Ser) and Zaa (Gly or Ala) have small, neutral side chains.. It functions in the pathway protein modification; lipoprotein biosynthesis (signal peptide cleavage). In terms of biological role, this protein specifically catalyzes the removal of signal peptides from prolipoproteins. The sequence is that of Lipoprotein signal peptidase from Malacoplasma penetrans (strain HF-2) (Mycoplasma penetrans).